The sequence spans 422 residues: Enolase (422 aa).

S41 contacts Mg(2+). E163 lines the (2R)-2-phosphoglycerate pocket. E204 acts as the Proton donor in catalysis. Residues D241, E284, and D311 each coordinate Mg(2+). Residue K336 is the Proton acceptor of the active site. R365, S366, and K387 together coordinate (2R)-2-phosphoglycerate.

It belongs to the enolase family. In terms of assembly, homodimer. Component of the RNA degradosome, a multiprotein complex involved in RNA processing and mRNA degradation. It depends on Mg(2+) as a cofactor.

The protein localises to the cytoplasm. Its subcellular location is the secreted. The protein resides in the cell surface. It catalyses the reaction (2R)-2-phosphoglycerate = phosphoenolpyruvate + H2O. The protein operates within carbohydrate degradation; glycolysis; pyruvate from D-glyceraldehyde 3-phosphate: step 4/5. Catalyzes the reversible conversion of 2-phosphoglycerate (2-PG) into phosphoenolpyruvate (PEP). It is essential for the degradation of carbohydrates via glycolysis. This Legionella pneumophila subsp. pneumophila (strain Philadelphia 1 / ATCC 33152 / DSM 7513) protein is Enolase.